A 240-amino-acid chain; its full sequence is Ubiquitin domain-containing protein 1 (240 aa).

Residues 1–48 (MGGCVGRPQGESQRSQSRASGQQRKRAGRNEPLKKERPRWKSDYPMTD) are disordered. Low complexity predominate over residues 12-22 (SQRSQSRASGQ). Residues 28–42 (GRNEPLKKERPRWKS) are compositionally biased toward basic and acidic residues. The Ubiquitin-like domain maps to 153 to 228 (FQLKVRLSTG…DTSYCKPATR (76 aa)).

In terms of biological role, may be involved in the regulation of cellular senescence through a positive feedback loop with TP53. The sequence is that of Ubiquitin domain-containing protein 1 (ubtd1) from Xenopus tropicalis (Western clawed frog).